A 183-amino-acid polypeptide reads, in one-letter code: Thymidine kinase (183 aa).

An ATP-binding site is contributed by 11-18 (GPMFSGKT). E89 serves as the catalytic Proton acceptor. F119 provides a ligand contact to substrate. Zn(2+) contacts are provided by C144 and C147. 163–167 (VMDIG) is a binding site for substrate. 2 residues coordinate Zn(2+): C176 and C179.

The protein belongs to the thymidine kinase family.

The enzyme catalyses thymidine + ATP = dTMP + ADP + H(+). This chain is Thymidine kinase (TK), found in Vertebrata (FPV).